Consider the following 374-residue polypeptide: tRNA (guanine(26)-N(2))-dimethyltransferase (374 aa).

One can recognise a Trm1 methyltransferase domain in the interval 4–368 (IEATEGTTTF…APLPVLYDAI (365 aa)). Residues R41, R66, D82, D108, and A109 each contribute to the S-adenosyl-L-methionine site. Zn(2+)-binding residues include C237, C240, C256, and C259.

Belongs to the class I-like SAM-binding methyltransferase superfamily. Trm1 family.

The catalysed reaction is guanosine(26) in tRNA + 2 S-adenosyl-L-methionine = N(2)-dimethylguanosine(26) in tRNA + 2 S-adenosyl-L-homocysteine + 2 H(+). In terms of biological role, dimethylates a single guanine residue at position 26 of a number of tRNAs using S-adenosyl-L-methionine as donor of the methyl groups. This chain is tRNA (guanine(26)-N(2))-dimethyltransferase, found in Methanoregula boonei (strain DSM 21154 / JCM 14090 / 6A8).